The following is a 264-amino-acid chain: 5'-nucleotidase SurE (264 aa).

Asp-10, Asp-11, Ser-43, and Asn-99 together coordinate a divalent metal cation.

Belongs to the SurE nucleotidase family. Requires a divalent metal cation as cofactor.

The protein localises to the cytoplasm. It carries out the reaction a ribonucleoside 5'-phosphate + H2O = a ribonucleoside + phosphate. Functionally, nucleotidase that shows phosphatase activity on nucleoside 5'-monophosphates. The chain is 5'-nucleotidase SurE from Methanococcus vannielii (strain ATCC 35089 / DSM 1224 / JCM 13029 / OCM 148 / SB).